Reading from the N-terminus, the 91-residue chain is uncharacterized protein (91 aa).

2 consecutive transmembrane segments (helical) span residues 22-42 and 53-73; these read WPVI…AFVV and VAGL…LAAA.

The protein localises to the cell membrane. This is an uncharacterized protein from Mycobacterium bovis (strain ATCC BAA-935 / AF2122/97).